The following is a 270-amino-acid chain: Type III pantothenate kinase (270 aa).

Position 11–18 (11–18 (DAGNSRIK)) interacts with ATP. Residues tyrosine 96 and 103–106 (GSDR) contribute to the substrate site. The Proton acceptor role is filled by aspartate 105. Threonine 129 contributes to the ATP binding site. Position 195 (threonine 195) interacts with substrate.

This sequence belongs to the type III pantothenate kinase family. In terms of assembly, homodimer. The cofactor is NH4(+). It depends on K(+) as a cofactor.

The protein localises to the cytoplasm. The enzyme catalyses (R)-pantothenate + ATP = (R)-4'-phosphopantothenate + ADP + H(+). Its pathway is cofactor biosynthesis; coenzyme A biosynthesis; CoA from (R)-pantothenate: step 1/5. Its function is as follows. Catalyzes the phosphorylation of pantothenate (Pan), the first step in CoA biosynthesis. The polypeptide is Type III pantothenate kinase (Paraburkholderia xenovorans (strain LB400)).